The primary structure comprises 572 residues: Phosphoenolpyruvate-protein phosphotransferase (572 aa).

Histidine 190 (tele-phosphohistidine intermediate) is an active-site residue. The phosphoenolpyruvate site is built by arginine 297 and arginine 333. Residues glutamate 427 and aspartate 451 each coordinate Mg(2+). Residues 450–451 and arginine 461 each bind phosphoenolpyruvate; that span reads ND. The active-site Proton donor is cysteine 498.

Belongs to the PEP-utilizing enzyme family. As to quaternary structure, homodimer. It depends on Mg(2+) as a cofactor.

The protein localises to the cytoplasm. The enzyme catalyses L-histidyl-[protein] + phosphoenolpyruvate = N(pros)-phospho-L-histidyl-[protein] + pyruvate. Functionally, general (non sugar-specific) component of the phosphoenolpyruvate-dependent sugar phosphotransferase system (sugar PTS). This major carbohydrate active-transport system catalyzes the phosphorylation of incoming sugar substrates concomitantly with their translocation across the cell membrane. Enzyme I transfers the phosphoryl group from phosphoenolpyruvate (PEP) to the phosphoryl carrier protein (HPr). This chain is Phosphoenolpyruvate-protein phosphotransferase (ptsI), found in Mycoplasma pneumoniae (strain ATCC 29342 / M129 / Subtype 1) (Mycoplasmoides pneumoniae).